Here is a 395-residue protein sequence, read N- to C-terminus: MTDSNRWLLPEGIEEALPPLAERLETCRRQLLDLYHRWGYELVMPPMIEYLESLLTGTGSDLDLQTFKLTDQLNGRLMGVRADMTPQVARIDAHSLNRDVPTRLCYMGTVLHTRPDGFAGSRSPMQVGAELYGHKGLDSDVETIRLMLETFRVCGVGNIFLDLGHVDIYRSLAADAGLTADDEAQLFDMLQRKALPEIRAFLNGLDAPAEVRERLLALGELNGDTAVLDEARRLLAGAGERVVRALDELSAIAGAVQRLYPEVRLHVDLSELRGFHYHTGAVFAAYVPGHGQELARGGRYDDIGRVFGRARPATGFSTDLKTLVRLSGQPLAAAPRGIFAPADPDPALLDAVAELRSRGERVIQGLAGQGGDAAAMGCDRVLARDSKHQWTVTDL.

This sequence belongs to the class-II aminoacyl-tRNA synthetase family. HisZ subfamily. In terms of assembly, heteromultimer composed of HisG and HisZ subunits.

It localises to the cytoplasm. Its pathway is amino-acid biosynthesis; L-histidine biosynthesis; L-histidine from 5-phospho-alpha-D-ribose 1-diphosphate: step 1/9. Its function is as follows. Required for the first step of histidine biosynthesis. May allow the feedback regulation of ATP phosphoribosyltransferase activity by histidine. This is ATP phosphoribosyltransferase regulatory subunit from Thioalkalivibrio sulfidiphilus (strain HL-EbGR7).